The chain runs to 496 residues: Rhamnulokinase (496 aa).

Residue Ala13–Arg17 coordinates ATP. Substrate-binding positions include Gly83 and His236–Thr238. Asp237 (proton acceptor) is an active-site residue. Thr259 contributes to the ATP binding site. Asn296 lines the substrate pocket. Residue Gln304 participates in ATP binding. Cys353 and Cys370 are oxidised to a cystine. Residue Gly402 participates in ATP binding. Residues Cys413 and Cys417 are joined by a disulfide bond.

This sequence belongs to the rhamnulokinase family. It depends on Mg(2+) as a cofactor.

The catalysed reaction is L-rhamnulose + ATP = L-rhamnulose 1-phosphate + ADP + H(+). It participates in carbohydrate degradation; L-rhamnose degradation; glycerone phosphate from L-rhamnose: step 2/3. In terms of biological role, involved in the catabolism of L-rhamnose (6-deoxy-L-mannose). Catalyzes the transfer of the gamma-phosphate group from ATP to the 1-hydroxyl group of L-rhamnulose to yield L-rhamnulose 1-phosphate. This is Rhamnulokinase from Pectobacterium atrosepticum (strain SCRI 1043 / ATCC BAA-672) (Erwinia carotovora subsp. atroseptica).